The following is a 309-amino-acid chain: Agglutinin (309 aa).

Methionine 1 bears the N-acetylmethionine mark. Jacalin-type lectin domains follow at residues 4–148 and 163–308; these read FLTV…YVKI and PRGP…HMEY.

The protein belongs to the jacalin lectin family.

Its function is as follows. D-mannose/D-glucose-binding lectin. Binds N-linked high-mannose-type glycans. Has a preference for smaller (Man(2)-Man(6)) high-mannose-type glycans to larger (Man(7)-Man(9)) ones. Recognizes both alpha1-6 extended and alpha1-3 extended monoantennary glycans. The addition of alpha1-2Man to the Man-alpha1-3Man-beta branch results in a significant loss of affinity, but beta1-2GlcNAc has some affinity. Has less affinity for biantennary glycans, and affinity is very weak for the biantennary complex-type N-glycans with bisecting GlcNAc. No affinity is observed for tri- and tetra-antennary glycans. Has mitogenic and hemagglutinating activities. The protein is Agglutinin of Castanea crenata (Japanese chestnut).